A 522-amino-acid polypeptide reads, in one-letter code: Glucose-6-phosphate 1-dehydrogenase (522 aa).

Residues 40-47 (GASGDLAK), arginine 74, and lysine 177 each bind NADP(+). D-glucose 6-phosphate contacts are provided by residues lysine 177, 207 to 211 (HYLGK), glutamate 245, and aspartate 264. Histidine 269 functions as the Proton acceptor in the catalytic mechanism. Residue arginine 364 coordinates NADP(+). D-glucose 6-phosphate-binding residues include lysine 367 and lysine 372. NADP(+)-binding residues include lysine 373, arginine 377, and arginine 401. Glutamine 403 lines the D-glucose 6-phosphate pocket. NADP(+) is bound by residues 409 to 411 (YMK), 429 to 431 (DLT), arginine 495, and tryptophan 517.

It belongs to the glucose-6-phosphate dehydrogenase family.

The protein resides in the cytoplasm. It is found in the cytosol. It catalyses the reaction D-glucose 6-phosphate + NADP(+) = 6-phospho-D-glucono-1,5-lactone + NADPH + H(+). It participates in carbohydrate degradation; pentose phosphate pathway; D-ribulose 5-phosphate from D-glucose 6-phosphate (oxidative stage): step 1/3. Cytosolic glucose-6-phosphate dehydrogenase that catalyzes the first and rate-limiting step of the oxidative branch within the pentose phosphate pathway/shunt, an alternative route to glycolysis for the dissimilation of carbohydrates and a major source of reducing power and metabolic intermediates for fatty acid and nucleic acid biosynthetic processes. The sequence is that of Glucose-6-phosphate 1-dehydrogenase (gspd-1) from Caenorhabditis elegans.